A 704-amino-acid chain; its full sequence is Elongation factor G 1 (704 aa).

In terms of domain architecture, tr-type G spans 8 to 290 (ERYRNIGICA…CVVEYMPAPT (283 aa)). Residues 17–24 (AHVDAGKT), 88–92 (DTPGH), and 142–145 (NKMD) contribute to the GTP site.

This sequence belongs to the TRAFAC class translation factor GTPase superfamily. Classic translation factor GTPase family. EF-G/EF-2 subfamily.

It is found in the cytoplasm. In terms of biological role, catalyzes the GTP-dependent ribosomal translocation step during translation elongation. During this step, the ribosome changes from the pre-translocational (PRE) to the post-translocational (POST) state as the newly formed A-site-bound peptidyl-tRNA and P-site-bound deacylated tRNA move to the P and E sites, respectively. Catalyzes the coordinated movement of the two tRNA molecules, the mRNA and conformational changes in the ribosome. This Pseudoalteromonas translucida (strain TAC 125) protein is Elongation factor G 1.